The primary structure comprises 463 residues: NADH-quinone oxidoreductase subunit N (463 aa).

The next 14 helical transmembrane spans lie at 2–22 (NTLIAITGLGIFCLLFEILNF), 25–45 (GIVPFTILGLLGVLALNFYEF), 61–81 (FSTAFSSLFIILTIFLVALSH), 91–110 (ISDFIAIKVFLLAGAVAMVS), 114–133 (LAMFFLGIEILSIALYVLAA), 149–169 (FLMGSFASGIILFGICLIYGA), 189–209 (IWFPIGMILMTIGMFFKIAAV), 223–243 (PALTTALMSTLAKVVAIATLF), 264–284 (FTNVILTISIASMTVGNIMAL), 292–312 (MLAFSGISHAGFMLMTFLTIA), 317–337 (VLLYYTAAYALAGIAAFSVIL), 362–382 (AAILTGSLLSMGGIPIFSGFF), 395–415 (GYVAIVIAAVINSIISVGYYF), and 434–454 (PFLIYAVAIISIGLNIALGLF).

This sequence belongs to the complex I subunit 2 family. As to quaternary structure, NDH-1 is composed of 14 different subunits. Subunits NuoA, H, J, K, L, M, N constitute the membrane sector of the complex.

The protein localises to the cell inner membrane. The enzyme catalyses a quinone + NADH + 5 H(+)(in) = a quinol + NAD(+) + 4 H(+)(out). Functionally, NDH-1 shuttles electrons from NADH, via FMN and iron-sulfur (Fe-S) centers, to quinones in the respiratory chain. The immediate electron acceptor for the enzyme in this species is believed to be a menaquinone. Couples the redox reaction to proton translocation (for every two electrons transferred, four hydrogen ions are translocated across the cytoplasmic membrane), and thus conserves the redox energy in a proton gradient. The chain is NADH-quinone oxidoreductase subunit N from Flavobacterium johnsoniae (strain ATCC 17061 / DSM 2064 / JCM 8514 / BCRC 14874 / CCUG 350202 / NBRC 14942 / NCIMB 11054 / UW101) (Cytophaga johnsonae).